Consider the following 576-residue polypeptide: V-type ATP synthase alpha chain (576 aa).

Gly238–Thr245 contacts ATP.

This sequence belongs to the ATPase alpha/beta chains family.

It catalyses the reaction ATP + H2O + 4 H(+)(in) = ADP + phosphate + 5 H(+)(out). Its function is as follows. Produces ATP from ADP in the presence of a proton gradient across the membrane. The V-type alpha chain is a catalytic subunit. The protein is V-type ATP synthase alpha chain of Borrelia duttonii (strain Ly).